We begin with the raw amino-acid sequence, 188 residues long: UPF0301 protein azo3459 (188 aa).

The protein belongs to the UPF0301 (AlgH) family.

The sequence is that of UPF0301 protein azo3459 from Azoarcus sp. (strain BH72).